The chain runs to 310 residues: Serine/threonine-protein kinase pim-2 (310 aa).

The Protein kinase domain maps to 30–290 (YTMGNLLGSG…LEQILQHPWM (261 aa)). Residues 36 to 44 (LGSGGFGSV) and K59 each bind ATP. Residue D167 is the Proton acceptor of the active site.

It belongs to the protein kinase superfamily. CAMK Ser/Thr protein kinase family. PIM subfamily. In terms of processing, autophosphorylated.

It carries out the reaction L-seryl-[protein] + ATP = O-phospho-L-seryl-[protein] + ADP + H(+). It catalyses the reaction L-threonyl-[protein] + ATP = O-phospho-L-threonyl-[protein] + ADP + H(+). In terms of biological role, proto-oncogene with serine/threonine kinase activity involved in cell survival and cell proliferation. In Danio rerio (Zebrafish), this protein is Serine/threonine-protein kinase pim-2 (pim2).